Here is a 612-residue protein sequence, read N- to C-terminus: Protein MUK1 (612 aa).

Positions 40–50 (EDQNDNERSSC) are enriched in basic and acidic residues. Residues 40–66 (EDQNDNERSSCDGDENSTTGERLENNK) form a disordered region. Residues 55-66 (NSTTGERLENNK) are compositionally biased toward polar residues. Phosphoserine is present on residues Ser-67, Ser-163, Ser-185, and Ser-245. The region spanning 273 to 414 (TEYNKLLNEK…VEGLTKNDFS (142 aa)) is the VPS9 domain. The tract at residues 494–560 (IRSYTPPHPN…SSASLEHGNR (67 aa)) is disordered. The segment covering 503 to 517 (NNTSNNNLHSSNNLN) has biased composition (low complexity). Over residues 518-529 (IPRSSSQLSMEL) the composition is skewed to polar residues. Residues 530-542 (SNRDTTEMSRDGS) show a composition bias toward basic and acidic residues. Residues 543-554 (RSTSSSSRSSAS) are compositionally biased toward low complexity.

It localises to the cytoplasm. Putative GTPase-activating protein. This chain is Protein MUK1 (MUK1), found in Saccharomyces cerevisiae (strain ATCC 204508 / S288c) (Baker's yeast).